Here is a 330-residue protein sequence, read N- to C-terminus: G-protein coupled receptor 157 (330 aa).

Over 1 to 15 (MPSPAPPTELLPWER) the chain is Extracellular. The helical transmembrane segment at 16–36 (AVVLLSCALSALGSGLLVATH) threads the bilayer. Topologically, residues 37-48 (ALWPDLRSRARR) are cytoplasmic. A helical membrane pass occupies residues 49 to 69 (LLLFLSLADLLSAASYFYGVL). Topologically, residues 70–87 (QDFAGTSWDCVLQGALST) are extracellular. Residues 88-108 (FANTSSFFWTVAIALYLYLSI) form a helical membrane-spanning segment. Over 109 to 119 (VRTTRGPSTDH) the chain is Cytoplasmic. Residues 120–140 (LIWAFHLISWGVPLAITVAAV) traverse the membrane as a helical segment. Residues 141–166 (SLKKIGYDASDVSVGWCWINLEAEDR) lie on the Extracellular side of the membrane. The helical transmembrane segment at 167-187 (VLWMLLTGKLWEMLAYILLPL) threads the bilayer. Over 188 to 227 (LYLLVRKHINRAHQALSEYRPICEGRQLQRGSSTSTADKK) the chain is Cytoplasmic. Residues 228-248 (LVLIPLIFICLRVWSTVRFVL) traverse the membrane as a helical segment. Over 249–259 (TLCGSPAVQTP) the chain is Extracellular. The helical transmembrane segment at 260 to 280 (VLVVLHGIGNTFQGGANCIMF) threads the bilayer. Residues 281–330 (VLCTRAVRTRLFSLCCCCPRPSTQSPPGAPTPPKIGESQESRRTPEVPST) are Cytoplasmic-facing. The disordered stretch occupies residues 301 to 330 (PSTQSPPGAPTPPKIGESQESRRTPEVPST). A compositionally biased stretch (basic and acidic residues) spans 317–330 (ESQESRRTPEVPST).

The protein belongs to the G-protein coupled receptor 2 family. In terms of tissue distribution, expressed in the primary cilia of radial glial progenitors (RGPs) in the developing neocortex.

It is found in the cell projection. The protein localises to the cilium membrane. Its function is as follows. Orphan receptor that promotes neuronal differentiation of radial glial progenitors (RGPs). The activity of this receptor is mediated by a G(q)-protein that activates a phosphatidylinositol-calcium second messenger. The protein is G-protein coupled receptor 157 (Gpr157) of Mus musculus (Mouse).